The following is a 37-amino-acid chain: Large ribosomal subunit protein bL36 (37 aa).

This sequence belongs to the bacterial ribosomal protein bL36 family.

The chain is Large ribosomal subunit protein bL36 from Borreliella afzelii (strain PKo) (Borrelia afzelii).